The following is a 439-amino-acid chain: Rhodopsin (439 aa).

N-linked (GlcNAc...) asparagine glycosylation occurs at N1. The Extracellular portion of the chain corresponds to 1-26 (NETWWYNPYMDIHSHWKQFDQVPAAV). Residues 27 to 51 (YYSLGIFIAICGIIGCAGNGIVIYL) traverse the membrane as a helical segment. Residues 52-63 (FTKTKSLQTPAN) lie on the Cytoplasmic side of the membrane. A helical transmembrane segment spans residues 64 to 90 (MFIINLAFSDFTFSLVNGFPMMTISCF). The Extracellular segment spans residues 91-102 (LKHWVFGQAACK). C101 and C179 form a disulfide bridge. The chain crosses the membrane as a helical span at residues 103 to 124 (VYGLIGGIFGLTSIMTMTMISI). The 'Ionic lock' involved in activated form stabilization signature appears at 125–127 (DRY). At 125–144 (DRYNVIRRPMSASKKMSHRK) the chain is on the cytoplasmic side. The chain crosses the membrane as a helical span at residues 145–165 (AFIMIVFVWIWSTIWAIGPIF). Residues 166–192 (GWGAYQLEGVLCNCSFDYITRDASTRS) lie on the Extracellular side of the membrane. Residues 193–217 (NIVCMYIFAFMFPIVVIFFCYFNIV) form a helical membrane-spanning segment. Residues 218 to 254 (MSVSNHEKEMAAMAKRLNAKELRKAQAGASAEMKLAK) lie on the Cytoplasmic side of the membrane. The chain crosses the membrane as a helical span at residues 255–276 (ISIVIVTQSLLSWSPYAIVALL). At 277 to 286 (AQFGPIEWVT) the chain is on the extracellular side. The helical transmembrane segment at 287-308 (PYAAQLPVMFAKASAIHNPMIY) threads the bilayer. K298 carries the N6-(retinylidene)lysine modification. Residues 309–439 (SVSHPKFREA…PQAAPPQGVD (131 aa)) lie on the Cytoplasmic side of the membrane. 2 S-palmitoyl cysteine lipidation sites follow: C329 and C330. Over residues 369 to 381 (MMQKMQAQQQQQP) the composition is skewed to low complexity. Residues 369 to 439 (MMQKMQAQQQ…PQAAPPQGVD (71 aa)) form a disordered region. The segment covering 382 to 433 (AYPPQGYPPQGYPPPPPQGYPPQGYPPQGYPPQGYPPPPQGPPPQGPPPQAA) has biased composition (pro residues).

Belongs to the G-protein coupled receptor 1 family. Opsin subfamily. Post-translationally, contains one covalently linked retinal chromophore. Upon light absorption, the covalently bound 11-cis-retinal is converted to all-trans-retinal. After hydrolysis of the Schiff base and release of the covalently bound all-trans-retinal, active rhodopsin is regenerated by binding of a fresh molecule of 11-cis-retinal.

It localises to the cell projection. The protein localises to the rhabdomere membrane. Functionally, photoreceptor required for image-forming vision at low light intensity. Light-induced isomerization of 11-cis to all-trans retinal triggers a conformational change that activates signaling via G-proteins. Signaling mediates the activation of phospholipase C. Subsequent receptor phosphorylation mediates displacement of the bound G-protein alpha subunit by arrestin and terminates signaling. The protein is Rhodopsin (RHO) of Alloteuthis subulata (Squid).